A 120-amino-acid chain; its full sequence is T-cell receptor beta chain V region PHDS203 (120 aa).

An N-terminal signal peptide occupies residues 1–11 (VVLCFLGTGLV). The v segment stretch occupies residues 12-106 (DMKVTQMSRY…TSVYFCAQGA (95 aa)). Residues Cys34 and Cys102 are joined by a disulfide bond. Residues 107–120 (PEQYFGPGTRLTVL) form a j segment region.

This is T-cell receptor beta chain V region PHDS203 from Mus musculus (Mouse).